The primary structure comprises 327 residues: Malate dehydrogenase (327 aa).

An NAD(+)-binding site is contributed by 11–17; the sequence is GAAGQIG. Positions 92 and 98 each coordinate substrate. Residues Asn-105, Gln-112, and 129-131 each bind NAD(+); that span reads VGN. Substrate-binding residues include Asn-131 and Arg-162. Residue His-187 is the Proton acceptor of the active site.

The protein belongs to the LDH/MDH superfamily. MDH type 2 family.

The catalysed reaction is (S)-malate + NAD(+) = oxaloacetate + NADH + H(+). In terms of biological role, catalyzes the reversible oxidation of malate to oxaloacetate. This Leptospira biflexa serovar Patoc (strain Patoc 1 / Ames) protein is Malate dehydrogenase.